A 182-amino-acid chain; its full sequence is Constitutive photomorphogenesis protein 10 (182 aa).

In terms of domain architecture, UBC core spans 36 to 182 (ASGKRIQREM…AKEWTLRFAK (147 aa)).

This sequence belongs to the ubiquitin-conjugating enzyme family. As to quaternary structure, component of the CDD complex, at least composed of COP10, DET1 and DDB1A. Interacts with E3 ubiquitin ligase COP1. Interacts with E2 ubiquitin conjugating UBC5. Interacts with CSN3, CSN4 and CSN8 subunits of the COP9 complex. As to expression, expressed in flower, leaf, stem and seedling. Expressed at lower level in root.

The protein resides in the nucleus. Functionally, component of light signal transduction machinery. Involved in repression of photomorphogenesis in darkness by participating in the CDD complex, a complex probably required to regulate the activity of ubiquitin conjugating enzymes (E2s). Repression of photomorphogenesis is probably mediated by ubiquitination and subsequent degradation of photomorphogenesis-promoting factors such as HY5, HYH and LAF1. Although strongly related to ubiquitin-conjugating enzyme, it has no catalytic activity by itself due to the absence of the conserved Cys active site at position 120. It can however enhance the activity of E2 conjugating enzymes. The chain is Constitutive photomorphogenesis protein 10 (COP10) from Arabidopsis thaliana (Mouse-ear cress).